The following is a 65-amino-acid chain: Large ribosomal subunit protein uL30 (65 aa).

The protein belongs to the universal ribosomal protein uL30 family. As to quaternary structure, part of the 50S ribosomal subunit.

This chain is Large ribosomal subunit protein uL30, found in Aster yellows witches'-broom phytoplasma (strain AYWB).